Here is a 350-residue protein sequence, read N- to C-terminus: Protein Wnt-2 (350 aa).

An N-terminal signal peptide occupies residues 1–25; it reads MNFLPNGICFYLSVAICWFSSRVDA. 11 disulfide bridges follow: cysteine 74–cysteine 85, cysteine 125–cysteine 133, cysteine 135–cysteine 155, cysteine 204–cysteine 218, cysteine 206–cysteine 213, cysteine 276–cysteine 307, cysteine 292–cysteine 302, cysteine 306–cysteine 346, cysteine 322–cysteine 337, cysteine 324–cysteine 334, and cysteine 329–cysteine 330. Asparagine 132 is a glycosylation site (N-linked (GlcNAc...) asparagine). Residue serine 210 is the site of O-palmitoleoyl serine; by PORCN attachment. N-linked (GlcNAc...) asparagine glycosylation is present at asparagine 293.

Belongs to the Wnt family. Palmitoleoylation is required for efficient binding to frizzled receptors. Depalmitoleoylation leads to Wnt signaling pathway inhibition.

Its subcellular location is the secreted. The protein resides in the extracellular space. It is found in the extracellular matrix. In terms of biological role, ligand for members of the frizzled family of seven transmembrane receptors. Functions in the canonical Wnt signaling pathway that results in activation of transcription factors of the TCF/LEF family. This Danio rerio (Zebrafish) protein is Protein Wnt-2 (wnt2).